We begin with the raw amino-acid sequence, 314 residues long: Fibrinogen-like protein 1 (314 aa).

The signal sequence occupies residues 1–22 (MGKIYSFVLVAIALMMGREGWA). Residues 28 to 62 (CLREQVRLRAQVHQLETRVKQQQTMIAQLLHEKEV) are a coiled coil. A Fibrinogen C-terminal domain is found at 76–308 (LGGKRQYADC…SVVMKIRPSD (233 aa)). Cystine bridges form between C85-C114 and C250-C263.

Homodimer. Interacts (via the Fibrinogen C-terminal domain) with LAG3 (via Ig-like domains 1 and 2). In terms of tissue distribution, mainly expressed in liver. Also expressed in brown adipose tissue.

It is found in the secreted. Immune suppressive molecule that inhibits antigen-specific T-cell activation by acting as a major ligand of LAG3. Responsible for LAG3 T-cell inhibitory function. Binds LAG3 independently from MHC class II (MHC-II). Secreted by, and promotes growth of, hepatocytes. In Mus musculus (Mouse), this protein is Fibrinogen-like protein 1 (Fgl1).